A 354-amino-acid chain; its full sequence is Protein YGP1 (354 aa).

Positions 1–19 are cleaved as a signal peptide; it reads MKFQVVLSALLACSSAVVA. The propeptide occupies 20–37; that stretch reads SPIENLFKYRAVKASHSK. Residues N40, N50, N53, N58, N61, N65, N87, N94, N100, N106, N118, N172, N239, and N286 are each glycosylated (N-linked (GlcNAc...) asparagine). Residues 50-354 form the Asparaginase/glutaminase domain; it reads NSSNVTYANG…SKSALESIFP (305 aa).

The protein to yeast sporulation-specific protein SPS100. In terms of processing, extensively N-glycosylated.

It localises to the secreted. May be involved in cellular adaptations prior to stationary phase. This chain is Protein YGP1 (YGP1), found in Saccharomyces cerevisiae (strain ATCC 204508 / S288c) (Baker's yeast).